A 322-amino-acid polypeptide reads, in one-letter code: RNA-binding motif protein, X-linked 2 (322 aa).

A Glycyl lysine isopeptide (Lys-Gly) (interchain with G-Cter in SUMO2) cross-link involves residue lysine 8. Positions 36 to 114 (AWIFLGGLPY…RTIRVDHVSN (79 aa)) constitute an RRM domain. The segment at 134–322 (KGCGARTPSP…SSNPSDRWRH (189 aa)) is disordered. Phosphothreonine is present on threonine 140. Residue serine 149 is modified to Phosphoserine. A compositionally biased stretch (basic residues) spans 155 to 171 (TKKHKKDKKEKKKKKKE). Serine 186 and serine 188 each carry phosphoserine. Positions 195–223 (KEKDDTGPKKHSSKNSERAQKSEPREGQK) are enriched in basic and acidic residues. The residue at position 232 (serine 232) is a Phosphoserine. Residues 240–274 (RELKKEKPKHEHKSSSRREAREEKTRIRDRGRSSD) are compositionally biased toward basic and acidic residues. Residue lysine 243 forms a Glycyl lysine isopeptide (Lys-Gly) (interchain with G-Cter in SUMO2) linkage. Serine 272 carries the phosphoserine modification. Basic residues predominate over residues 289–308 (YRSRSRSRDKSHRHKRARRS). Serine 314 carries the phosphoserine modification.

Belongs to the IST3 family. In terms of assembly, part of the activated spliceosome B/catalytic step 1 spliceosome, one of the forms of the spliceosome which has a well-formed active site but still cannot catalyze the branching reaction and is composed of at least 52 proteins, the U2, U5 and U6 snRNAs and the pre-mRNA. Component of the minor spliceosome, which splices U12-type introns.

It localises to the nucleus. Its function is as follows. Involved in pre-mRNA splicing as component of the activated spliceosome. As a component of the minor spliceosome, involved in the splicing of U12-type introns in pre-mRNAs. The chain is RNA-binding motif protein, X-linked 2 (RBMX2) from Homo sapiens (Human).